Reading from the N-terminus, the 715-residue chain is Serrate RNA effector molecule homolog (715 aa).

Disordered stretches follow at residues 1 to 87 (MDSD…YSGP), 223 to 259 (ENKDAAEKVEDQVKDEVKEEPNEEQEEGAIDDETDKA), and 629 to 715 (EPKH…DDIP). Basic and acidic residues-rich tracts occupy residues 7–25 (GDRRRDKFARERRDDDSYR), 37–57 (YDNKRPAGRREDYQVKRSRGD), and 223–242 (ENKDAAEKVEDQVKDEVKEE). Positions 243–256 (PNEEQEEGAIDDET) are enriched in acidic residues. Over residues 629–659 (EPKHMPHMSRDDHRGGGGDRGYGRERDDDRG) the composition is skewed to basic and acidic residues.

This sequence belongs to the ARS2 family.

The protein localises to the nucleus. In terms of biological role, acts as a mediator between the cap-binding complex (CBC) and the primary microRNAs (miRNAs) processing machinery. Contributes to the stability and delivery of capped primary miRNA transcripts to the primary miRNA processing complex, thereby playing a role in RNA-mediated gene silencing (RNAi) by miRNAs. This is Serrate RNA effector molecule homolog from Caenorhabditis briggsae.